Reading from the N-terminus, the 1600-residue chain is A disintegrin and metalloproteinase with thrombospondin motifs 12 (1600 aa).

Residues 1–25 (MPCARGSWLAKLSIVAQLINFGAFC) form the signal peptide. Residues 26-244 (HGRQTQPWPV…TLRSRSLSRR (219 aa)) constitute a propeptide that is removed on maturation. Asn-105 is a glycosylation site (N-linked (GlcNAc...) asparagine). Residues 210–217 (PICGLKDS) carry the Cysteine switch motif. Position 212 (Cys-212) interacts with Zn(2+). The Peptidase M12B domain maps to 250–460 (RWVETLVVAD…GRGFCLDDIP (211 aa)). 11 disulfides stabilise this stretch: Cys-326-Cys-380, Cys-355-Cys-362, Cys-374-Cys-455, Cys-413-Cys-439, Cys-482-Cys-505, Cys-493-Cys-511, Cys-500-Cys-530, Cys-524-Cys-535, Cys-558-Cys-595, Cys-562-Cys-600, and Cys-573-Cys-585. His-396 lines the Zn(2+) pocket. The active site involves Glu-397. His-400 and His-406 together coordinate Zn(2+). Positions 469–548 (VIAPGVIYDV…GKKPESIPGG (80 aa)) constitute a Disintegrin domain. 4 TSP type-1 domains span residues 546-601 (PGGW…HPCR), 827-887 (KLLY…KDCP), 891-947 (WAGE…RDIL), and 948-1001 (CPSD…QQCP). The interval 705 to 831 (CQTVKKLFRQ…DNDVEKLLYF (127 aa)) is spacer 1. The segment at 1001 to 1321 (PFSRRVLKPN…HLMKDHSPAY (321 aa)) is spacer 2. 2 disordered regions span residues 1006–1140 (VLKP…LSSS) and 1158–1179 (PEVEIHSGSGEDSDQPLNKDKS). Residues 1038–1047 (PTPLSTPTVP) show a composition bias toward low complexity. Over residues 1048-1107 (ESMSTSTPTINSLGSTIASQEDANGMGWQNNSTQAEEGSHFPTSSGSTSQVPVTSWSLSI) the composition is skewed to polar residues. The segment covering 1130-1140 (TTTSDSGLSSS) has biased composition (low complexity). TSP type-1 domains are found at residues 1318 to 1371 (SPAY…RPCA), 1373 to 1428 (WRVG…CNLE), 1429 to 1477 (PCGE…NRHL), and 1478 to 1538 (CCHW…QACR). The 41-residue stretch at 1541–1581 (ADLTCLKDRLSISFCQTLKSMRKCSVPSVRAQCCLSCPQAP) folds into the PLAC domain.

As to quaternary structure, interacts with COMP. Zn(2+) is required as a cofactor. In terms of processing, the precursor is cleaved by a furin endopeptidase. Subjected to an intracellular maturation process yielding a 120 kDa N-terminal fragment containing the metalloproteinase, disintegrin, one TSP type-1 and the Cys-rich domains and a 83 kDa C-terminal fragment containing the spacer 2 and four TSP type-1 domains. Post-translationally, glycosylated. Can be O-fucosylated by POFUT2 on a serine or a threonine residue found within the consensus sequence C1-X(2)-(S/T)-C2-G of the TSP type-1 repeat domains where C1 and C2 are the first and second cysteine residue of the repeat, respectively. Fucosylated repeats can then be further glycosylated by the addition of a beta-1,3-glucose residue by the glucosyltransferase, B3GALTL. Fucosylation mediates the efficient secretion of ADAMTS family members. Can also be C-glycosylated with one or two mannose molecules on tryptophan residues within the consensus sequence W-X-X-W of the TPRs, and N-glycosylated. These other glycosylations can also facilitate secretion.

The protein localises to the secreted. It localises to the extracellular space. The protein resides in the extracellular matrix. With respect to regulation, inhibited by alpha-2 macroglobulin. Metalloprotease that plays a role in the degradation of COMP. Also cleaves alpha-2 macroglobulin and aggregan. Has anti-tumorigenic properties. The polypeptide is A disintegrin and metalloproteinase with thrombospondin motifs 12 (Adamts12) (Mus musculus (Mouse)).